A 525-amino-acid polypeptide reads, in one-letter code: NADH-quinone oxidoreductase subunit N (525 aa).

Transmembrane regions (helical) follow at residues 26 to 46 (LSPMLILFGVALAGVLVDAFA), 53 to 73 (VLQPLLAGAGFIGAFVAVVLL), 90 to 110 (PTLFLQGTILVFALLSVLLVA), 143 to 163 (VQTEAYPLMVFSVSGMLLFVA), 167 to 187 (LLVMFVALEILSLPLYLLCGL), 202 to 222 (YFLLGAFSSAFFLYGVAFAYG), 246 to 266 (LYLSLALLGVGLFFKIGAAPF), 278 to 298 (PTPITAFMAAGTKVAAFGALL), 314 to 334 (PVIWAVAILTMVVGAVLALTQ), 341 to 361 (LAYSAVAHAGFLLVGMAGSNI), 368 to 388 (MFYLVTYGFTTIAAFAVVSLV), 411 to 431 (LAGTFAFLLLALAGIPLTSGF), 449 to 469 (LVVVALVCSAIAAFFYVRVIV), and 487 to 507 (PTLTFATVGIGALMTLLLGVA).

It belongs to the complex I subunit 2 family. In terms of assembly, NDH-1 is composed of 14 different subunits. Subunits NuoA, H, J, K, L, M, N constitute the membrane sector of the complex.

It localises to the cell membrane. It carries out the reaction a quinone + NADH + 5 H(+)(in) = a quinol + NAD(+) + 4 H(+)(out). In terms of biological role, NDH-1 shuttles electrons from NADH, via FMN and iron-sulfur (Fe-S) centers, to quinones in the respiratory chain. The immediate electron acceptor for the enzyme in this species is believed to be a menaquinone. Couples the redox reaction to proton translocation (for every two electrons transferred, four hydrogen ions are translocated across the cytoplasmic membrane), and thus conserves the redox energy in a proton gradient. This Parafrankia sp. (strain EAN1pec) protein is NADH-quinone oxidoreductase subunit N.